Here is a 692-residue protein sequence, read N- to C-terminus: MTMIRKEVDFGGRRLQLETGRMARQADGAVLVSSGDTVVLVTAVGRREMKPGQDFFPLTVNYQEKAYAAGKIPGGFFKREGRPTEKETLTSRLIDRPIRPLFPKGFMNEVQVIATVVSVDRDNDPDILALVGASAALAVSGIPFNGPIGAARVAYIDGKYVLNPSYAQLTTSQLDLVVAGTRQAVLMVESEAQQLSEEIMLEAVMFGHAQFQPVIETIEALAREAGKPRWEWVAPVADEALGVQVREKATPLLQEAYALTEKQARSKRLEDVQQAMAVEFGSDDAGRGDMVRGLLKKIETGIVRGRILDGAPRIDGRDSKTVRPITIEAGVLPRTHGSALFTRGETQALVVATLGTKGDEQIIDALQGESRDRFMLHYNFPPFSTGETGMVGSPKRREIGHGRLAKRAIAAVLPTDSEFPYSLRVVSEVLESNGSSSMATVCGASLALMDAGVPLKAPVAGVAMGLIKEGARFAVLTDILGDEDHLGDMDFKVAGTEQGVTALQMDIKIDGITREIMAQALQQALAGRLHILGLMNGVLSRGRGELSDYAPRIITIQINPDRIRDVIGPGGKVIRALTEETGATIDIQDNGTVTIASVDGEAGAAAKRRIELLTADVQVDTIYDGKVAKIMDFGAFVTILPGRDGLLHISQISNERVSDVHDHLKEGQAVRVKVLEVDRQGKIKLSMKDIPQ.

The Mg(2+) site is built by aspartate 484 and aspartate 490. Positions 551 to 610 (PRIITIQINPDRIRDVIGPGGKVIRALTEETGATIDIQDNGTVTIASVDGEAGAAAKRRI) constitute a KH domain. In terms of domain architecture, S1 motif spans 620 to 688 (DTIYDGKVAK…RQGKIKLSMK (69 aa)).

The protein belongs to the polyribonucleotide nucleotidyltransferase family. As to quaternary structure, component of the RNA degradosome, which is a multiprotein complex involved in RNA processing and mRNA degradation. Requires Mg(2+) as cofactor.

Its subcellular location is the cytoplasm. It carries out the reaction RNA(n+1) + phosphate = RNA(n) + a ribonucleoside 5'-diphosphate. Its function is as follows. Involved in mRNA degradation. Catalyzes the phosphorolysis of single-stranded polyribonucleotides processively in the 3'- to 5'-direction. The protein is Polyribonucleotide nucleotidyltransferase of Acidithiobacillus ferrooxidans (strain ATCC 53993 / BNL-5-31) (Leptospirillum ferrooxidans (ATCC 53993)).